The following is a 374-amino-acid chain: Serine/threonine-protein kinase-transforming protein mos (374 aa).

The Protein kinase domain occupies 94-370 (VCLMHRLGSG…LLQRDLKAFR (277 aa)). ATP is bound by residues 100-108 (LGSGGFGSV) and Lys-121. Catalysis depends on Asp-229, which acts as the Proton acceptor.

This sequence belongs to the protein kinase superfamily. Ser/Thr protein kinase family.

The enzyme catalyses L-seryl-[protein] + ATP = O-phospho-L-seryl-[protein] + ADP + H(+). It catalyses the reaction L-threonyl-[protein] + ATP = O-phospho-L-threonyl-[protein] + ADP + H(+). This Mus musculus (Mouse) protein is Serine/threonine-protein kinase-transforming protein mos (V-MOS).